The primary structure comprises 440 residues: Chromosome partition protein MukF (440 aa).

Residues 208 to 236 are leucine-zipper; the sequence is LSETSGTLRELQDTLEAAGDKLQANLLQI.

The protein belongs to the MukF family. Interacts, and probably forms a ternary complex, with MukE and MukB via its C-terminal region. The complex formation is stimulated by calcium or magnesium. It is required for an interaction between MukE and MukB.

Its subcellular location is the cytoplasm. It localises to the nucleoid. Functionally, involved in chromosome condensation, segregation and cell cycle progression. May participate in facilitating chromosome segregation by condensation DNA from both sides of a centrally located replisome during cell division. Not required for mini-F plasmid partitioning. Probably acts via its interaction with MukB and MukE. Overexpression results in anucleate cells. It has a calcium binding activity. The protein is Chromosome partition protein MukF of Cronobacter sakazakii (strain ATCC BAA-894) (Enterobacter sakazakii).